The primary structure comprises 229 residues: Putative N-acetylmannosamine-6-phosphate 2-epimerase (229 aa).

The protein belongs to the NanE family.

The catalysed reaction is an N-acyl-D-glucosamine 6-phosphate = an N-acyl-D-mannosamine 6-phosphate. It participates in amino-sugar metabolism; N-acetylneuraminate degradation; D-fructose 6-phosphate from N-acetylneuraminate: step 3/5. In terms of biological role, converts N-acetylmannosamine-6-phosphate (ManNAc-6-P) to N-acetylglucosamine-6-phosphate (GlcNAc-6-P). This Cutibacterium acnes (strain DSM 16379 / KPA171202) (Propionibacterium acnes) protein is Putative N-acetylmannosamine-6-phosphate 2-epimerase.